We begin with the raw amino-acid sequence, 437 residues long: UDP-N-acetylmuramate--L-alanine ligase (437 aa).

114–120 (GTHGKTS) serves as a coordination point for ATP.

This sequence belongs to the MurCDEF family.

Its subcellular location is the cytoplasm. It carries out the reaction UDP-N-acetyl-alpha-D-muramate + L-alanine + ATP = UDP-N-acetyl-alpha-D-muramoyl-L-alanine + ADP + phosphate + H(+). Its pathway is cell wall biogenesis; peptidoglycan biosynthesis. Functionally, cell wall formation. This Lactobacillus helveticus (strain DPC 4571) protein is UDP-N-acetylmuramate--L-alanine ligase.